We begin with the raw amino-acid sequence, 647 residues long: MPSKSACLRHTEAPGQLEGRMLQGQPPNTEKKLIPTPGFLPASDSQGSETNPMPPFSIPAKTSNQNPQTKANLITPQPPIRPKLERTLSLDDKGWRRRRFRGSQEDLTVQNGASPCRGSLQDSVAQSPAYSRPLPCLSTSLQEIPKSRRATGSEGGSPSLWSDCLSGMISTSLDLLHRDAASGGPPSRLASLHASHTPPAMDLSIASSSLRTANKVDPEHTDYKLRMQTRLVRAHSNLGPSRPRSPLAGDDHSIHSARSFSLLAPIRTKDIRSRSYLEGSLLASGALLGAEELARYFPDRNMALFVATWNMQGQKELPASLDEFLLPTEADYTQDLYVIGIQEGCSDRREWETRLQETLGPQYVLLSSAAHGVLYMSLFIRRDLIWFCSEVEYSTVTTRIVSQIKTKGALGVSFTFFGTSFLFITSHFTSGDGKVAERLLDYSRTIQALALPRNVPDTNPYRSSAGDVTTRFDEVFWFGDFNFRLSGGRVAVEAFLKQKPEVDVLALLQHDQLTREMKKGSIFRGFEEAEIHFLPSYKFDIGKDTYDSTSKQRTPSYTDRVLYKSRHKGDICPMKYSSCPGIKTSDHRPVYGLFQVKVRPGRDNIPLAAGKFDRELYLIGIKRRISKEIQRQEALKSQSSSAVCTVS.

Disordered stretches follow at residues 1–80, 101–131, and 177–196; these read MPSK…QPPI, RGSQ…PAYS, and HRDA…HASH. Repeat 1 spans residues 52–55; sequence PMPP. The 3 X 4 AA repeats of P-X-X-P stretch occupies residues 52-243; sequence PMPPFSIPAK…AHSNLGPSRP (192 aa). Residues 60–75 show a composition bias toward polar residues; the sequence is AKTSNQNPQTKANLIT. The stretch at 76–79 is repeat 2; that stretch reads PQPP. Position 103 is a phosphoserine (Ser-103). Over residues 120–129 the composition is skewed to polar residues; sequence LQDSVAQSPA. Position 197 is a phosphothreonine (Thr-197). Repeat unit 3 spans residues 240–243; it reads PSRP. Phosphoserine is present on residues Ser-245 and Ser-259. Cys-644 is modified (cysteine methyl ester). A lipid anchor (S-farnesyl cysteine) is attached at Cys-644. Residues 645-647 constitute a propeptide, removed in mature form; the sequence is TVS.

It belongs to the inositol polyphosphate 5-phosphatase family. In terms of assembly, interacts (when prenylated) with PDE6D; this is important for normal location in cilia. Highly expressed in testis, in pachytene and diplotene spermatocytes, but not in more mature elongating spermatids. Detected in neurons throughout the brain.

The protein localises to the cytoplasm. It localises to the cytoskeleton. Its subcellular location is the cilium axoneme. It is found in the golgi apparatus. The protein resides in the golgi stack membrane. The protein localises to the cell projection. It localises to the ruffle. Its subcellular location is the cell membrane. It is found in the nucleus. It catalyses the reaction a 1,2-diacyl-sn-glycero-3-phospho-(1D-myo-inositol-4,5-bisphosphate) + H2O = a 1,2-diacyl-sn-glycero-3-phospho-(1D-myo-inositol 4-phosphate) + phosphate. The catalysed reaction is a 1,2-diacyl-sn-glycero-3-phospho-(1D-myo-inositol-3,4,5-trisphosphate) + H2O = a 1,2-diacyl-sn-glycero-3-phospho-(1D-myo-inositol-3,4-bisphosphate) + phosphate. The enzyme catalyses a 1,2-diacyl-sn-glycero-3-phospho-(1D-myo-inositol-3,5-bisphosphate) + H2O = a 1,2-diacyl-sn-glycero-3-phospho-(1D-myo-inositol-3-phosphate) + phosphate. In terms of biological role, phosphatidylinositol (PtdIns) phosphatase that specifically hydrolyzes the 5-phosphate of phosphatidylinositol-3,4,5-trisphosphate (PtdIns(3,4,5)P3), phosphatidylinositol 4,5-bisphosphate (PtdIns(4,5)P2) and phosphatidylinositol 3,5-bisphosphate (PtdIns(3,5)P2). Specific for lipid substrates, inactive towards water soluble inositol phosphates. Specific for lipid substrates, inactive towards water soluble inositol phosphates. Plays an essential role in the primary cilium by controlling ciliary growth and phosphoinositide 3-kinase (PI3K) signaling and stability. The protein is Phosphatidylinositol polyphosphate 5-phosphatase type IV (Inpp5e) of Mus musculus (Mouse).